Reading from the N-terminus, the 338-residue chain is Protein RecA (338 aa).

Position 68–75 (G68–T75) interacts with ATP.

Belongs to the RecA family.

Its subcellular location is the cytoplasm. Its function is as follows. Can catalyze the hydrolysis of ATP in the presence of single-stranded DNA, the ATP-dependent uptake of single-stranded DNA by duplex DNA, and the ATP-dependent hybridization of homologous single-stranded DNAs. It interacts with LexA causing its activation and leading to its autocatalytic cleavage. In Citrifermentans bemidjiense (strain ATCC BAA-1014 / DSM 16622 / JCM 12645 / Bem) (Geobacter bemidjiensis), this protein is Protein RecA.